A 318-amino-acid chain; its full sequence is Ribosomal RNA small subunit methyltransferase H (318 aa).

S-adenosyl-L-methionine is bound by residues 34 to 36 (GGY), D52, F79, D100, and Q107. The tract at residues 286–318 (GPAPDEARANPRARSAKLRAAARTAAPAWETVS) is disordered. Low complexity predominate over residues 303–318 (LRAAARTAAPAWETVS).

Belongs to the methyltransferase superfamily. RsmH family.

Its subcellular location is the cytoplasm. The enzyme catalyses cytidine(1402) in 16S rRNA + S-adenosyl-L-methionine = N(4)-methylcytidine(1402) in 16S rRNA + S-adenosyl-L-homocysteine + H(+). Functionally, specifically methylates the N4 position of cytidine in position 1402 (C1402) of 16S rRNA. The sequence is that of Ribosomal RNA small subunit methyltransferase H from Paramagnetospirillum magneticum (strain ATCC 700264 / AMB-1) (Magnetospirillum magneticum).